We begin with the raw amino-acid sequence, 453 residues long: Wall-associated protein (453 aa).

The first 29 residues, 1–29 (MKMKRKLLSLVSVLTILLGAFWVTKIVKA), serve as a signal peptide directing secretion. The tract at residues 331 to 403 (GRASSRVKRQ…TASQTNVPTT (73 aa)) is disordered. The span at 342–403 (ETTTVTETTT…TASQTNVPTT (62 aa)) shows a compositional bias: low complexity. Positions 422-426 (LPSTG) match the LPXTG sorting signal motif. Pentaglycyl murein peptidoglycan amidated threonine is present on Thr-425. Residues 426–453 (GEQAGLLLTTVGLVIVAVAGVYFYRTRR) constitute a propeptide, removed by sortase.

It localises to the secreted. It is found in the cell wall. This chain is Wall-associated protein (wapA), found in Streptococcus mutans serotype c (strain ATCC 700610 / UA159).